Reading from the N-terminus, the 452-residue chain is Class E vacuolar protein-sorting machinery protein HSE1 (452 aa).

S2 bears the N-acetylserine mark. Residues 15 to 145 enclose the VHS domain; the sequence is ATDPKLRSDN…KIKRKAPYLV (131 aa). 2 disordered regions span residues 144–166 and 187–212; these read LVQP…DDEE and QEKE…PAHK. At S162 the chain carries Phosphoserine. The 20-residue stretch at 162-181 folds into the UIM domain; it reads SDDEELQKALKMSLFEYEKQ. Residues 197–207 are compositionally biased toward low complexity; that stretch reads QQQQQHQQQNQ. Positions 217–276 constitute an SH3 domain; the sequence is TVVRRVRALYDLTTNEPDELSFRKGDVITVLEQVYRDWWKGALRGNMGIFPLNYVTPIVE. The tract at residues 389–452 is disordered; that stretch reads AGMTHANNTP…VSQPPPGYEQ (64 aa). Residues 393-433 are compositionally biased toward polar residues; it reads HANNTPVMPPQRQSYQSNEYSPYPSNLPIQHPTNSANNTPQ.

It belongs to the STAM family. In terms of assembly, component of the ESCRT-0 complex composed of HSE1 and VPS27. Interacts with the ESCRT-I subunit VPS23, the UBP7 deubiquitinase and the E3 ligase RSP5. May form a complex composed of VPS27, HSE1 and DOA1. Interacts (via SH3 domain) with DOA1.

It is found in the endosome membrane. In terms of biological role, component of the ESCRT-0 complex which is the sorting receptor for ubiquitinated cargo proteins at the multivesicular body (MVB) and recruits ESCRT-I to the MVB outer membrane. The polypeptide is Class E vacuolar protein-sorting machinery protein HSE1 (HSE1) (Saccharomyces cerevisiae (strain ATCC 204508 / S288c) (Baker's yeast)).